The sequence spans 113 residues: Iron-sulfur cluster insertion protein ErpA (113 aa).

3 residues coordinate iron-sulfur cluster: Cys41, Cys105, and Cys107.

It belongs to the HesB/IscA family. As to quaternary structure, homodimer. Requires iron-sulfur cluster as cofactor.

Its function is as follows. Required for insertion of 4Fe-4S clusters for at least IspG. This is Iron-sulfur cluster insertion protein ErpA from Histophilus somni (strain 129Pt) (Haemophilus somnus).